The following is a 641-amino-acid chain: Chaperone protein HtpG (641 aa).

Positions 1–348 (MTTATEKQTL…SNDLSLNVSR (348 aa)) are a; substrate-binding. Residues 349–565 (EILQNDKAVE…AYDMGVQMRR (217 aa)) are b. A c region spans residues 566-641 (IMEAAGQALP…KLLLELSNAG (76 aa)).

The protein belongs to the heat shock protein 90 family. In terms of assembly, homodimer.

It is found in the cytoplasm. In terms of biological role, molecular chaperone. Has ATPase activity. This Hahella chejuensis (strain KCTC 2396) protein is Chaperone protein HtpG.